The primary structure comprises 257 residues: Beta-fibrinogenase mucrofibrase-1 (257 aa).

A signal peptide spans 1-18 (MVLIRVLANLLILQLSYA). Residues 19 to 24 (QKSSEL) constitute a propeptide that is removed on maturation. In terms of domain architecture, Peptidase S1 spans 25–248 (VIGGDECNIN…HLDWIKGIIA (224 aa)). Intrachain disulfides connect C31–C162, C49–C65, C97–C255, C141–C209, C173–C188, and C199–C224. Catalysis depends on charge relay system residues H64 and D109. S203 serves as the catalytic Charge relay system.

It belongs to the peptidase S1 family. Snake venom subfamily. In terms of assembly, monomer. As to expression, expressed by the venom gland.

The protein localises to the secreted. In terms of biological role, snake venom serine protease with strong beta-fibrinogenolytic activities, angiotensin I (AGT)-degrading activities and strong kallikrein-like activities in vitro, releasing bradykinin from kininogen (KNG1). Intravenous injection strongly lowers blood pressure in experimental rats, which may be explained by the action on angiotensin I and kininogen. The protein is Beta-fibrinogenase mucrofibrase-1 of Protobothrops mucrosquamatus (Taiwan habu).